We begin with the raw amino-acid sequence, 542 residues long: Homeobox and leucine zipper protein Homez (542 aa).

Residues 55–114 (WTQAIQTSELDGNEHLLQAFSYFPYPSLADIALLCLRHGLQMEKVKTWFMAQRLRCGISW) constitute a DNA-binding region (homeobox 1). Residues 165 to 193 (LSPLAPSEQPTHMKGLKVEPEEPSQVSQL) are disordered. Glycyl lysine isopeptide (Lys-Gly) (interchain with G-Cter in SUMO2) cross-links involve residues lysine 181 and lysine 201. The tract at residues 250–307 (VHQPDKPASVSLLDNSCKEESEPSGIPPSSSTSSPSFQALANGTTATPKPLQPLGCIS) is disordered. The segment covering 272–285 (PSGIPPSSSTSSPS) has biased composition (low complexity). The segment covering 286–296 (FQALANGTTAT) has biased composition (polar residues). A Phosphoserine modification is found at serine 345. 2 consecutive DNA-binding regions (homeobox) follow at residues 349-409 (QHQR…KHGQ) and 443-502 (TPPL…AEVV). Residues 352-357 (RKTKRK) carry the Nuclear localization signal motif. Disordered regions lie at residues 424 to 454 (FQDP…PPPD) and 501 to 542 (VVVC…IIWD). At threonine 443 the chain carries Phosphothreonine. A compositionally biased stretch (pro residues) spans 444 to 454 (PPLPAPPPPPD). The span at 505–542 (LDEEDEEDEEDELPEDGEEEEEEEEDDDDGDDDVIIWD) shows a compositional bias: acidic residues.

As to quaternary structure, homodimer or heterodimer (Potential). Interacts with HOXC8. As to expression, ubiquitous. Strongly expressed in testis.

Its subcellular location is the nucleus. Functionally, may function as a transcriptional regulator. The protein is Homeobox and leucine zipper protein Homez (Homez) of Mus musculus (Mouse).